A 190-amino-acid polypeptide reads, in one-letter code: Peptidyl-tRNA hydrolase (190 aa).

Tyr-17 contributes to the tRNA binding site. His-22 functions as the Proton acceptor in the catalytic mechanism. 2 residues coordinate tRNA: Tyr-67 and Asn-69.

It belongs to the PTH family. Monomer.

It localises to the cytoplasm. The catalysed reaction is an N-acyl-L-alpha-aminoacyl-tRNA + H2O = an N-acyl-L-amino acid + a tRNA + H(+). Functionally, hydrolyzes ribosome-free peptidyl-tRNAs (with 1 or more amino acids incorporated), which drop off the ribosome during protein synthesis, or as a result of ribosome stalling. In terms of biological role, catalyzes the release of premature peptidyl moieties from peptidyl-tRNA molecules trapped in stalled 50S ribosomal subunits, and thus maintains levels of free tRNAs and 50S ribosomes. The sequence is that of Peptidyl-tRNA hydrolase from Moorella thermoacetica (strain ATCC 39073 / JCM 9320).